The chain runs to 544 residues: Methionine--tRNA ligase 1 (544 aa).

Residues 10 to 20 (PYANGSLHLGH) carry the 'HIGH' region motif. Zn(2+)-binding residues include cysteine 141, cysteine 144, cysteine 153, and cysteine 156. Residues 329–333 (KLSTS) carry the 'KMSKS' region motif. Threonine 332 is a binding site for ATP.

This sequence belongs to the class-I aminoacyl-tRNA synthetase family. MetG type 1 subfamily. As to quaternary structure, monomer. Zn(2+) serves as cofactor.

It localises to the cytoplasm. The catalysed reaction is tRNA(Met) + L-methionine + ATP = L-methionyl-tRNA(Met) + AMP + diphosphate. Is required not only for elongation of protein synthesis but also for the initiation of all mRNA translation through initiator tRNA(fMet) aminoacylation. This Bacillus cereus (strain ATCC 10987 / NRS 248) protein is Methionine--tRNA ligase 1.